The chain runs to 522 residues: MGFLDNPTIILAHIRQSHVTSDDTGMCEVVLIDHDVDLEKIHPPSMPGDSGSEIQGSNGETQGYVYAQSVDITSSWDFGIRRRSNTAQRLERLRKERQNQIKCKNIQWKERNSKQSAQELKSLFEKKSLKEKPPNSGKQSILSVRLEQCPLQLNNPFNEYSKFDGKGHVGTTATKKIDVYLPLHSSQDRLLPMTVVTMASARVQDLIGLICWQYTSEGREPKLNDNVSAYCLHIAEDDGEVDTDFPPLDSNEPIHKFGFSTLALVEKYSSPGLTSKESLFVRINAAHGFSLIQVDNTKVTMKEILLKAVKRRKGSQKISGPQYRLEKQRQPNVAVDLESTLESQSAWEFCLVRENSSRADGVFEEDSQIDIATVQDMLSSHHYKSFKVSMIHRLRFTTELQLGISGDKVEIDPVTSQKASTKFWIKQKPISIDSDLLCACDLAEEKSPSHAIFKLTYLSNHDYKHLYFESDAATVNEIVLKVNYILESRASTARADYFAQKQRKLNRRTSFSFQKEKKSGQQ.

The interval 2 to 184 (GFLDNPTIIL…KKIDVYLPLH (183 aa)) is interaction with MAP3K2. An interaction with NBN region spans residues 2–267 (GFLDNPTIIL…GFSTLALVEK (266 aa)). Thr-86 is subject to Phosphothreonine. 4 positions are modified to phosphoserine: Ser-128, Ser-186, Ser-315, and Ser-356. Residues 139–267 (QSILSVRLEQ…GFSTLALVEK (129 aa)) enclose the CRIM domain. Positions 279–353 (LFVRINAAHG…QSAWEFCLVR (75 aa)) are SIN1-type RBD. The 106-residue stretch at 382–487 (HYKSFKVSMI…IVLKVNYILE (106 aa)) folds into the SIN1-type PH domain. Residue Arg-393 participates in a 1,2-diacyl-sn-glycero-3-phospho-(1D-myo-inositol-3,4,5-trisphosphate) binding. Position 398 is a phosphothreonine (Thr-398). The a 1,2-diacyl-sn-glycero-3-phospho-(1D-myo-inositol-3,4,5-trisphosphate) site is built by Lys-428 and Lys-464. Positions 468 to 522 (FESDAATVNEIVLKVNYILESRASTARADYFAQKQRKLNRRTSFSFQKEKKSGQQ) are interaction with ATF2. Ser-510 is modified (phosphoserine).

It belongs to the SIN1 family. As to quaternary structure, component of the mechanistic target of rapamycin complex 2 (mTORC2), consisting in two heterotretramers composed of MTOR, MLST8, RICTOR and MAPKAP1/SIN1. The mTORC2 core complex associates with PRR5/PROTOR1 and/or PRR5L/PROTOR2. Contrary to mTORC1, mTORC2 does not bind to and is not sensitive to FKBP12-rapamycin. Interacts with MAP3K2. Interacts with ATF2. Interacts with MAPK8. Interacts with GTP-bound HRAS and KRAS; inhibiting their activity. Interacts with IFNAR2. Post-translationally, phosphorylation at Ser-128 by PKC promotes relocalization to the perinuclear region, where the mTORC2 complex specifically mediates phosphorylation of SGK1. Phosphorylated at Thr-86 by AKT1 or RPS6KB1 in the presence of growth factors; the effect of this phosphorylation is however unclear. According to two studies, phosphorylation at Thr-86 by AKT1 is part of a positive feedback loop that increases mTORC2 activation. According to another study, phosphorylation at Thr-86 and Thr-398 by RPS6KB1 promotes dissociation from the mTORC2 complex, leading to inhibit mTORC2 signaling. In terms of tissue distribution, present in the lumenal epithelium and glandular epithelium of endometrium (at protein level).

The protein localises to the cell membrane. Its subcellular location is the cytoplasmic vesicle. It is found in the endoplasmic reticulum membrane. It localises to the early endosome membrane. The protein resides in the late endosome membrane. The protein localises to the lysosome membrane. Its subcellular location is the golgi apparatus membrane. It is found in the mitochondrion outer membrane. It localises to the cytoplasm. The protein resides in the perinuclear region. The protein localises to the nucleus. With respect to regulation, phosphatidylinositol 3,4,5-trisphosphate (PI(3,4,5)P3) promotes MTOR activation by relieving MAPKAP1/SIN1-mediated inhibition of MTOR that takes place in absence of PI(3,4,5)P3. Its function is as follows. Component of the mechanistic target of rapamycin complex 2 (mTORC2), which transduces signals from growth factors to pathways involved in proliferation, cytoskeletal organization, lipogenesis and anabolic output. In response to growth factors, mTORC2 phosphorylates and activates AGC protein kinase family members, including AKT (AKT1, AKT2 and AKT3), PKC (PRKCA, PRKCB and PRKCE) and SGK1. In contrast to mTORC1, mTORC2 is nutrient-insensitive. Within the mTORC2 complex, MAPKAP1/SIN1 acts as a substrate adapter which recognizes and binds AGC protein kinase family members for phosphorylation by MTOR. mTORC2 plays a critical role in AKT1 activation by mediating phosphorylation of different sites depending on the context, such as 'Thr-450', 'Ser-473', 'Ser-477' or 'Thr-479', facilitating the phosphorylation of the activation loop of AKT1 on 'Thr-308' by PDPK1/PDK1 which is a prerequisite for full activation. mTORC2 catalyzes the phosphorylation of SGK1 at 'Ser-422' and of PRKCA on 'Ser-657'. The mTORC2 complex also phosphorylates various proteins involved in insulin signaling, such as FBXW8 and IGF2BP1. mTORC2 acts upstream of Rho GTPases to regulate the actin cytoskeleton, probably by activating one or more Rho-type guanine nucleotide exchange factors. mTORC2 promotes the serum-induced formation of stress-fibers or F-actin. MAPKAP1 inhibits MAP3K2 by preventing its dimerization and autophosphorylation. Inhibits HRAS and KRAS independently of mTORC2 complex. Enhances osmotic stress-induced phosphorylation of ATF2 and ATF2-mediated transcription. Involved in ciliogenesis, regulates cilia length through its interaction with CCDC28B independently of mTORC2 complex. The polypeptide is Target of rapamycin complex 2 subunit MAPKAP1 (MAPKAP1) (Ovis aries (Sheep)).